The following is a 109-amino-acid chain: UPF0060 membrane protein YfjF (109 aa).

The next 4 membrane-spanning stretches (helical) occupy residues I6 to W26, P32 to F52, V61 to D81, and L87 to P107.

Belongs to the UPF0060 family.

The protein localises to the cell membrane. The polypeptide is UPF0060 membrane protein YfjF (yfjF) (Bacillus subtilis (strain 168)).